Consider the following 217-residue polypeptide: Zinc finger CCHC-type and RNA-binding motif-containing protein 1 (217 aa).

Residues 10–88 (STVYVSNLPF…RVIKASIAID (79 aa)) form the RRM domain. The CCHC-type zinc finger occupies 105–122 (SKCYECGESGHLSYACPK). The segment at 120-217 (CPKNMLGERE…YFSDEEELSD (98 aa)) is disordered. Acidic residues predominate over residues 145–163 (PEEEIEEVEESEDEGEDPA). Phosphoserine occurs at positions 155, 210, and 216.

Component of the U11/U12 snRNPs that are part of the U12-type spliceosome. Interacts with ZRSR1.

Its subcellular location is the nucleus. It localises to the nucleoplasm. This Bos taurus (Bovine) protein is Zinc finger CCHC-type and RNA-binding motif-containing protein 1 (ZCRB1).